The chain runs to 737 residues: Relaxin receptor 2 (737 aa).

At 1–399 the chain is on the extracellular side; the sequence is MWLLLHVILL…SSSEDLLANG (399 aa). Residues 27 to 64 enclose the LDL-receptor class A domain; the sequence is LCPKGYFPCGNLTKCLPRAFHCDGVDDCGNGADEDNCG. 3 disulfide bridges follow: Cys-28/Cys-41, Cys-35/Cys-54, and Cys-48/Cys-63. Residue Asn-37 is glycosylated (N-linked (GlcNAc...) asparagine). N-linked (GlcNAc...) asparagine glycosylation is present at Asn-121. LRR repeat units follow at residues 121-142, 145-166, 169-190, 193-214, 217-238, 241-262, 265-286, 289-310, 313-334, and 337-358; these read NVTL…VFSR, ELRK…AFLG, NLQI…IFKD, QLAW…SFMG, SLFF…LCAQ, QLNW…TFLT, SLTV…TFSS, NLGE…LFSD, LLQK…QFGS, and QLQS…MFQP. The N-linked (GlcNAc...) asparagine glycan is linked to Asn-257. Asn-318, Asn-350, and Asn-361 each carry an N-linked (GlcNAc...) asparagine glycan. A helical membrane pass occupies residues 400 to 420; sequence ILRVSVWVIAFITCVGNFLVI. Residues 421–438 lie on the Cytoplasmic side of the membrane; sequence AVRSLIKAENTTHAMSIK. A helical transmembrane segment spans residues 439–459; it reads ILCCADCLMGVYLFSVGVFDI. At 460-478 the chain is on the extracellular side; the sequence is KYRGQYQKYALLWMESVPC. A disulfide bridge connects residues Cys-478 and Cys-556. The chain crosses the membrane as a helical span at residues 479 to 501; sequence RLLGFLATLSTEVSVLLLTFLTL. Topologically, residues 502 to 520 are cytoplasmic; it reads EKFLVIVFPFSNLRLGKRQ. The chain crosses the membrane as a helical span at residues 521-541; sequence TAVALASIWVVGFLIAAVPFT. Residues 542–575 lie on the Extracellular side of the membrane; that stretch reads REDYFGNFYGKNGVCFPLHYDQAEDFGSRGYSLG. A helical membrane pass occupies residues 576 to 596; it reads IFLGVNLLAFLVIVISYVTMF. Residues 597–622 lie on the Cytoplasmic side of the membrane; that stretch reads CSIHKTALQTAEVRSHIGKEVAVANR. Residues 623–643 traverse the membrane as a helical segment; it reads FFFIVFSDAICWIPVFVVKIL. At 644–653 the chain is on the extracellular side; sequence SLLQVEIPGT. The helical transmembrane segment at 654-674 threads the bilayer; sequence ITSWIVVFFLPVNSALNPILY. Residues 675-737 are Cytoplasmic-facing; sequence TLTTSFFKDK…GDSIMKPVSP (63 aa).

Belongs to the G-protein coupled receptor 1 family. As to expression, expressed in embryonic and adult gonads of males and females, as well in male gubernarculum. Expressed also in brain. Not detected in kidney, spleen and heart.

It is found in the cell membrane. Its function is as follows. Receptor for relaxin. The activity of this receptor is mediated by G proteins leading to stimulation of adenylate cyclase and an increase of cAMP. May also be a receptor for Leydig insulin-like peptide (INSL3). This chain is Relaxin receptor 2 (Rxfp2), found in Mus musculus (Mouse).